The sequence spans 196 residues: Small ribosomal subunit protein uS4c (196 aa).

A disordered region spans residues 17 to 36 (ALPGLTRKTPKSGSNLKKKF). One can recognise an S4 RNA-binding domain in the interval 89-157 (MRLDNILFRL…VQNYIASSDP (69 aa)).

This sequence belongs to the universal ribosomal protein uS4 family. Part of the 30S ribosomal subunit. Contacts protein S5. The interaction surface between S4 and S5 is involved in control of translational fidelity.

The protein resides in the plastid. The protein localises to the chloroplast. In terms of biological role, one of the primary rRNA binding proteins, it binds directly to 16S rRNA where it nucleates assembly of the body of the 30S subunit. Its function is as follows. With S5 and S12 plays an important role in translational accuracy. This Calamagrostis epigeios (Wood small-reed grass) protein is Small ribosomal subunit protein uS4c (rps4).